The primary structure comprises 1951 residues: [F-actin]-monooxygenase MICAL2 (1951 aa).

The tract at residues 2 to 494 is monooxygenase domain; it reads GENEDEKQAQ…KHLYITKEMD (493 aa). FAD is bound by residues Cys97, 116 to 118, 123 to 125, Phe183, Tyr298, and Asp398; these read EKR and RNN. Positions 516-619 constitute a Calponin-homology (CH) domain; the sequence is DIRPNKLLTW…MVMYLSKFYE (104 aa). Phosphoserine is present on Ser631. The short motif at 660-681 is the Nuclear localization signal element; it reads RKRTPRVDTQTEENDMNKRRRQ. Disordered stretches follow at residues 663–712 and 891–921; these read TPRV…SQNK and KRVP…AADS. A compositionally biased stretch (low complexity) spans 691 to 700; the sequence is SFSSRSLGSS. Pro residues predominate over residues 896-909; that stretch reads AHPPSPPSCLPSPH. Positions 910-921 are enriched in low complexity; that stretch reads PAAASSPPAADS. An LIM zinc-binding domain is found at 991 to 1053; that stretch reads DTCYFCKKRV…KPHFVHCKTS (63 aa). Zn(2+) contacts are provided by Cys993, Cys996, His1014, Cys1017, Cys1020, Cys1023, Cys1043, and His1046. Thr1052 is subject to Phosphoserine. Disordered stretches follow at residues 1054 to 1141, 1158 to 1314, 1348 to 1368, 1383 to 1427, 1451 to 1476, 1489 to 1580, 1594 to 1624, 1678 to 1697, 1706 to 1731, and 1747 to 1766; these read SKQR…RISP, TSED…VSPT, VEPG…EGCQ, ILGK…RKLG, HKTG…TCSS, QKKA…AKKA, AQAS…STTP, GDFF…VPSL, STSM…GEGG, and PVTE…EADS. Positions 1061–1070 are enriched in basic and acidic residues; sequence AELNQQREEE. 3 stretches are compositionally biased toward polar residues: residues 1129–1138, 1228–1239, and 1246–1256; these read PRPSEWTSVR, HSLQSPTPSKYQ, and QSNSTPMNQRA. Positions 1257-1268 are enriched in pro residues; that stretch reads PSPPKEPPPPPS. Residues 1269 to 1285 show a composition bias toward low complexity; it reads LSSSSSLPSSFSSASVP. A compositionally biased stretch (polar residues) spans 1291–1306; the sequence is DSSSPQVTYNLHSPQI. The tract at residues 1314-1353 is interaction with MAPK1; that stretch reads TPIYLRRARAQGIVKEIPLYLPHSPMLESTEDCLVEPGRE. Residues 1350 to 1359 are compositionally biased toward basic and acidic residues; it reads PGRESLRSPE. Over residues 1532 to 1545 the composition is skewed to basic and acidic residues; that stretch reads EAGKKTSPKPESKT. A compositionally biased stretch (low complexity) spans 1599–1616; it reads LSLPNSILRSRSLPSRPS. Over residues 1678–1688 the composition is skewed to basic and acidic residues; that stretch reads GDFFNSPKEEG. The residue at position 1683 (Ser1683) is a Phosphoserine. A compositionally biased stretch (polar residues) spans 1706 to 1720; sequence STSMGQVAHPSSTGQ. The span at 1749–1759 shows a compositional bias: low complexity; that stretch reads TEATSSPTSSS. The bMERB domain occupies 1789–1939; that stretch reads KQEELKRLHK…ERTQDQHFEN (151 aa).

The protein belongs to the Mical family. Interacts with PLXNA4. Interacts with RAB1B. Interacts with MAPK1/ERK2. Interacts with RAB1B, RAB35, RAB8A, RAB10, RAB13 and RAB15 (in their GTP-bound forms); binding to RAB1B and RAB35 is of low affinity compared to other Rab proteins; binding to RAB1B and RAB35 is of low affinity compared to other Rab proteins; at least in case of RAB8A may bind 2 molecules of RAB8A simultaneously through a high and a low affinity binding site, respectively. FAD serves as cofactor. As to expression, expressed only in testis (at protein level).

It localises to the cytoplasm. The protein localises to the nucleus. It carries out the reaction L-methionyl-[F-actin] + NADPH + O2 + H(+) = L-methionyl-(R)-S-oxide-[F-actin] + NADP(+) + H2O. Functionally, methionine monooxygenase that promotes depolymerization of F-actin by mediating oxidation of residues 'Met-44' and 'Met-47' on actin to form methionine-sulfoxide, resulting in actin filament disassembly and preventing repolymerization. Regulates the disassembly of branched actin networks also by oxidizing ARP3B-containing ARP2/3 complexes leading to ARP3B dissociation from the network. Acts as a key regulator of the SRF signaling pathway elicited by nerve growth factor and serum: mediates oxidation and subsequent depolymerization of nuclear actin, leading to increase MKL1/MRTF-A presence in the nucleus and promote SRF:MKL1/MRTF-A-dependent gene transcription. Does not activate SRF:MKL1/MRTF-A through RhoA. The protein is [F-actin]-monooxygenase MICAL2 of Mus musculus (Mouse).